A 146-amino-acid chain; its full sequence is ATP synthase epsilon chain (146 aa).

The protein belongs to the ATPase epsilon chain family. F-type ATPases have 2 components, CF(1) - the catalytic core - and CF(0) - the membrane proton channel. CF(1) has five subunits: alpha(3), beta(3), gamma(1), delta(1), epsilon(1). CF(0) has three main subunits: a, b and c.

The protein localises to the cell membrane. In terms of biological role, produces ATP from ADP in the presence of a proton gradient across the membrane. This is ATP synthase epsilon chain from Lactobacillus delbrueckii subsp. bulgaricus (strain ATCC 11842 / DSM 20081 / BCRC 10696 / JCM 1002 / NBRC 13953 / NCIMB 11778 / NCTC 12712 / WDCM 00102 / Lb 14).